The primary structure comprises 181 residues: Putative ankyrin repeat protein RBE_0150 (181 aa).

4 ANK repeats span residues 50–79 (IGQKLLIKATYANDLDLVKALHDKGVKLGT), 83–114 (LGRTSLHHAIKAGAGKDLIEFLIDNAGIDINA), 118–147 (SGSTLMHWAVNSHHIPAIKLLQTKKADYFT), and 151–180 (LGQTPLKLAEYYGHDDVIELLAENSSAGYY).

The sequence is that of Putative ankyrin repeat protein RBE_0150 from Rickettsia bellii (strain RML369-C).